Consider the following 183-residue polypeptide: Protein US32 (183 aa).

The protein belongs to the herpesviridae US1 family.

This Homo sapiens (Human) protein is Protein US32 (US32).